The following is a 425-amino-acid chain: Meiotic recombination protein spo-11 (425 aa).

Residues Met-1–Asp-38 are disordered. The region spanning Gly-15–Ile-158 is the Topo IIA-type catalytic domain. A compositionally biased stretch (acidic residues) spans Asp-27–Asp-38. The O-(5'-phospho-DNA)-tyrosine intermediate role is filled by Tyr-119. The Mg(2+) site is built by Glu-202 and Asp-255.

The protein belongs to the TOP6A family. Requires Mg(2+) as cofactor.

Its subcellular location is the nucleus. It carries out the reaction ATP-dependent breakage, passage and rejoining of double-stranded DNA.. Its function is as follows. Required for meiotic recombination. Mediates DNA cleavage that forms the double-strand breaks (DSB) that initiate meiotic recombination. In Caenorhabditis elegans, this protein is Meiotic recombination protein spo-11 (spo-11).